A 33-amino-acid polypeptide reads, in one-letter code: Cytochrome b6-f complex subunit 8 (33 aa).

A helical transmembrane segment spans residues L2–V22.

The protein belongs to the PetN family. The 4 large subunits of the cytochrome b6-f complex are cytochrome b6, subunit IV (17 kDa polypeptide, PetD), cytochrome f and the Rieske protein, while the 4 small subunits are PetG, PetL, PetM and PetN. The complex functions as a dimer.

Its subcellular location is the cellular thylakoid membrane. Functionally, component of the cytochrome b6-f complex, which mediates electron transfer between photosystem II (PSII) and photosystem I (PSI), cyclic electron flow around PSI, and state transitions. The sequence is that of Cytochrome b6-f complex subunit 8 from Synechococcus sp. (strain RCC307).